Reading from the N-terminus, the 314-residue chain is Methionyl-tRNA formyltransferase (314 aa).

112 to 115 is a binding site for (6S)-5,6,7,8-tetrahydrofolate; that stretch reads SLLP.

It belongs to the Fmt family.

It carries out the reaction L-methionyl-tRNA(fMet) + (6R)-10-formyltetrahydrofolate = N-formyl-L-methionyl-tRNA(fMet) + (6S)-5,6,7,8-tetrahydrofolate + H(+). Its function is as follows. Attaches a formyl group to the free amino group of methionyl-tRNA(fMet). The formyl group appears to play a dual role in the initiator identity of N-formylmethionyl-tRNA by promoting its recognition by IF2 and preventing the misappropriation of this tRNA by the elongation apparatus. This chain is Methionyl-tRNA formyltransferase, found in Legionella pneumophila (strain Paris).